The sequence spans 543 residues: Carboxypeptidase Y homolog A (543 aa).

A signal peptide spans 1–17 (MRVLPATLLVGAATAAA). The propeptide occupies 18–124 (PPFQQILGLP…KLEAYDLRVK (107 aa)). Intrachain disulfides connect C179/C419, C313/C327, C337/C360, C344/C353, and C382/C389. N-linked (GlcNAc...) asparagine glycosylation occurs at N210. The active site involves S266. Residue D458 is part of the active site. An N-linked (GlcNAc...) asparagine glycan is attached at N509. The active site involves H520.

This sequence belongs to the peptidase S10 family.

Its subcellular location is the vacuole. It catalyses the reaction Release of a C-terminal amino acid with broad specificity.. Its function is as follows. Vacuolar carboxypeptidase involved in degradation of small peptides. Digests preferentially peptides containing an aliphatic or hydrophobic residue in P1' position, as well as methionine, leucine or phenylalanine in P1 position of ester substrate. The polypeptide is Carboxypeptidase Y homolog A (cpyA) (Aspergillus fumigatus (strain ATCC MYA-4609 / CBS 101355 / FGSC A1100 / Af293) (Neosartorya fumigata)).